A 65-amino-acid chain; its full sequence is Large ribosomal subunit protein bL35 (65 aa).

A disordered region spans residues 1-23; the sequence is MPKMKTHRGAAKRFKKTGTGKLK.

The protein belongs to the bacterial ribosomal protein bL35 family.

This chain is Large ribosomal subunit protein bL35, found in Clostridium perfringens (strain ATCC 13124 / DSM 756 / JCM 1290 / NCIMB 6125 / NCTC 8237 / Type A).